The primary structure comprises 446 residues: Exodeoxyribonuclease 7 large subunit (446 aa).

The protein belongs to the XseA family. In terms of assembly, heterooligomer composed of large and small subunits.

Its subcellular location is the cytoplasm. It carries out the reaction Exonucleolytic cleavage in either 5'- to 3'- or 3'- to 5'-direction to yield nucleoside 5'-phosphates.. In terms of biological role, bidirectionally degrades single-stranded DNA into large acid-insoluble oligonucleotides, which are then degraded further into small acid-soluble oligonucleotides. This chain is Exodeoxyribonuclease 7 large subunit, found in Acholeplasma laidlawii (strain PG-8A).